The following is a 405-amino-acid chain: Nicotinate phosphoribosyltransferase (405 aa).

His-230 is subject to Phosphohistidine; by autocatalysis.

The protein belongs to the NAPRTase family. Post-translationally, transiently phosphorylated on a His residue during the reaction cycle. Phosphorylation strongly increases the affinity for substrates and increases the rate of nicotinate D-ribonucleotide production. Dephosphorylation regenerates the low-affinity form of the enzyme, leading to product release.

It catalyses the reaction nicotinate + 5-phospho-alpha-D-ribose 1-diphosphate + ATP + H2O = nicotinate beta-D-ribonucleotide + ADP + phosphate + diphosphate. It participates in cofactor biosynthesis; NAD(+) biosynthesis; nicotinate D-ribonucleotide from nicotinate: step 1/1. Catalyzes the synthesis of beta-nicotinate D-ribonucleotide from nicotinate and 5-phospho-D-ribose 1-phosphate at the expense of ATP. The sequence is that of Nicotinate phosphoribosyltransferase from Bordetella pertussis (strain Tohama I / ATCC BAA-589 / NCTC 13251).